We begin with the raw amino-acid sequence, 435 residues long: Serine--tRNA ligase (435 aa).

Position 241–243 (241–243 (TAE)) interacts with L-serine. An ATP-binding site is contributed by 272 to 274 (RSE). Residue Glu-295 participates in L-serine binding. 359–362 (EISS) contacts ATP. Ser-395 contacts L-serine.

It belongs to the class-II aminoacyl-tRNA synthetase family. Type-1 seryl-tRNA synthetase subfamily. In terms of assembly, homodimer. The tRNA molecule binds across the dimer.

It is found in the cytoplasm. The catalysed reaction is tRNA(Ser) + L-serine + ATP = L-seryl-tRNA(Ser) + AMP + diphosphate + H(+). The enzyme catalyses tRNA(Sec) + L-serine + ATP = L-seryl-tRNA(Sec) + AMP + diphosphate + H(+). It functions in the pathway aminoacyl-tRNA biosynthesis; selenocysteinyl-tRNA(Sec) biosynthesis; L-seryl-tRNA(Sec) from L-serine and tRNA(Sec): step 1/1. Catalyzes the attachment of serine to tRNA(Ser). Is also able to aminoacylate tRNA(Sec) with serine, to form the misacylated tRNA L-seryl-tRNA(Sec), which will be further converted into selenocysteinyl-tRNA(Sec). This Actinobacillus pleuropneumoniae serotype 7 (strain AP76) protein is Serine--tRNA ligase.